Consider the following 392-residue polypeptide: Sex-determining region Y protein (392 aa).

A sufficient for interaction with KPNB1 region spans residues 4–81 (HVKRPMNAFM…YKYQPHRRAK (78 aa)). The HMG box DNA-binding region spans 5–73 (VKRPMNAFMV…LHREKYPNYK (69 aa)). 2 required for nuclear localization regions span residues 6-22 (KRPMNAFMVWSRGERHK) and 75-81 (QPHRRAK). A sufficient for interaction with EP300 region spans residues 52 to 84 (RPFFQEAQRLKILHREKYPNYKYQPHRRAKVSQ). The residue at position 81 (lysine 81) is an N6-acetyllysine. Residues 92-144 (AVASTKLYNLLQWDRNPHAITYRQDWSRAAHLYSKNQQSFYWQPVDIPTGHLQ) are necessary for interaction with ZNF208 isoform KRAB-O. The segment at 94 to 138 (ASTKLYNLLQWDRNPHAITYRQDWSRAAHLYSKNQQSFYWQPVDI) is necessary for interaction with SLC9A3R2 and nuclear accumulation of SLC9A3R2. The disordered stretch occupies residues 142-361 (HLQQQQQQQQ…QQQQQQQQQQ (220 aa)). Over residues 144 to 181 (QQQQQQQQQQQFHNHHQQQQQFYDHHQQQQQQQQQQQQ) the composition is skewed to low complexity. Composition is skewed to basic and acidic residues over residues 182-197 (FHDHHQQKQQFHDHHQ) and 210-228 (QEQQFHDHHQQQQQFHDHQ). Residues 229 to 238 (QQQQQQQQQQ) show a composition bias toward low complexity. Composition is skewed to basic and acidic residues over residues 239–250 (FHDHHQQKQQFH), 261–295 (FHDHQQQQQQFHDHQQQQHQFHDHPQQKQQFHDHP), and 313–349 (QFHDHHQQKQQFHDHHQQKQQFHDHHQQQQQFHDHHQ). Low complexity predominate over residues 350–361 (QQQQQQQQQQQQ).

It belongs to the SRY family. As to quaternary structure, interacts with KPNB1, ZNF208 isoform KRAB-O, PARP1 and SLC9A3R2. The interaction with KPNB1 is sensitive to dissociation by Ran in the GTP-bound form. Interaction with PARP1 impaired its DNA-binding activity. Interacts with CALM, EP300, HDAC3 and WT1. The interaction with EP300 modulates its DNA-binding activity. Post-translationally, degraded due to the presence of a degron at the C-terminus that promotes its degradation. In terms of processing, phosphorylated on serine residues by PKA. Phosphorylation by PKA enhances its DNA-binding activity and stimulates transcription repression. Acetylation of Lys-81 contributes to its nuclear localization and enhances its interaction with KPNB1. Post-translationally, poly-ADP-ribosylated by PARP1. ADP-ribosylation reduces its DNA-binding activity. Expressed in gonadal somatic pre-Sertoli cells. Expressed in the substantia nigra of the brain (at protein level). Expressed in diencephalon, cortex, the substantia nigra of the midbrain and the medial mammillary bodies of the hypothalamus of male, but not female. In terms of tissue distribution, expressed in gonadal somatic pre-Sertoli cells. While it is expressed at lower level compared to isoform Sry-S, this form is more stable and constitutes the predominant protein product of the Sry locus in XY gonads (at protein level).

It localises to the nucleus speckle. The protein localises to the cytoplasm. It is found in the nucleus. Functionally, transcriptional regulator that controls a genetic switch in male development. It is necessary and sufficient for initiating male sex determination by directing the development of supporting cell precursors (pre-Sertoli cells) as Sertoli rather than granulosa cells. Involved in different aspects of gene regulation including promoter activation or repression. Binds to the DNA consensus sequence 5'-[AT]AACAA[AT]-3'. SRY HMG box recognizes DNA by partial intercalation in the minor groove and promotes DNA bending. Also involved in pre-mRNA splicing. In male adult brain involved in the maintenance of motor functions of dopaminergic neurons. In terms of biological role, constitutes the major isoform, which is necessary and sufficient for initiating male sex determination. Constitutes a minor isoform, which is unstable due to the presence of a degron at the C-terminus that promotes its degradation. Not necessary and sufficient for initiating male sex determination. The protein is Sex-determining region Y protein of Mus musculus (Mouse).